We begin with the raw amino-acid sequence, 351 residues long: N-acetyl-gamma-glutamyl-phosphate reductase (351 aa).

Cysteine 154 is an active-site residue.

The protein belongs to the NAGSA dehydrogenase family. Type 1 subfamily.

Its subcellular location is the cytoplasm. The enzyme catalyses N-acetyl-L-glutamate 5-semialdehyde + phosphate + NADP(+) = N-acetyl-L-glutamyl 5-phosphate + NADPH + H(+). Its pathway is amino-acid biosynthesis; L-arginine biosynthesis; N(2)-acetyl-L-ornithine from L-glutamate: step 3/4. In terms of biological role, catalyzes the NADPH-dependent reduction of N-acetyl-5-glutamyl phosphate to yield N-acetyl-L-glutamate 5-semialdehyde. The sequence is that of N-acetyl-gamma-glutamyl-phosphate reductase from Prochlorococcus marinus (strain MIT 9215).